We begin with the raw amino-acid sequence, 177 residues long: Large ribosomal subunit protein uL6 (177 aa).

The protein belongs to the universal ribosomal protein uL6 family. As to quaternary structure, part of the 50S ribosomal subunit.

In terms of biological role, this protein binds to the 23S rRNA, and is important in its secondary structure. It is located near the subunit interface in the base of the L7/L12 stalk, and near the tRNA binding site of the peptidyltransferase center. The sequence is that of Large ribosomal subunit protein uL6 from Rhizobium etli (strain ATCC 51251 / DSM 11541 / JCM 21823 / NBRC 15573 / CFN 42).